The primary structure comprises 183 residues: Ribosome-recycling factor (183 aa).

It belongs to the RRF family.

The protein localises to the cytoplasm. Its function is as follows. Responsible for the release of ribosomes from messenger RNA at the termination of protein biosynthesis. May increase the efficiency of translation by recycling ribosomes from one round of translation to another. The polypeptide is Ribosome-recycling factor (Mycoplasma genitalium (strain ATCC 33530 / DSM 19775 / NCTC 10195 / G37) (Mycoplasmoides genitalium)).